The sequence spans 385 residues: Odorant receptor 82a (385 aa).

The Cytoplasmic portion of the chain corresponds to 1–32; it reads MGRLFQLQEYCLRAMGHKDDMDSTDSTALSLK. The chain crosses the membrane as a helical span at residues 33 to 53; the sequence is HISSLIFVISAQYPLISYVAY. Residues 54 to 62 are Extracellular-facing; the sequence is NRNDMEKVT. The helical transmembrane segment at 63–83 threads the bilayer; that stretch reads ACLSVVFTNMLTVIKISTFLA. Over 84-131 the chain is Cytoplasmic; that stretch reads NRKDFWEMIHRFRKMHEQSASHIPRYREGLDYVAEANKLASFLGRAYC. The chain crosses the membrane as a helical span at residues 132-152; that stretch reads VSCGLTGLYFMLGPIVKIGVC. The Extracellular portion of the chain corresponds to 153–186; that stretch reads RWHGTTCDKELPMPMKFPFNDLESPGYEVCFLYT. A helical membrane pass occupies residues 187–207; that stretch reads VLVTVVVVAYASAVDGLFISF. The Cytoplasmic segment spans residues 208 to 257; it reads AINLRAHFQTLQRQIENWEFPSSEPDTQIRLKSIVEYHVLLLSLSRKLRS. A helical transmembrane segment spans residues 258-278; it reads IYTPTVMGQFVITSLQVGVII. Residues 279–290 lie on the Extracellular side of the membrane; sequence YQLVTNMDSVMD. A helical transmembrane segment spans residues 291–311; that stretch reads LLLYASFFGSIMLQLFIYCYG. Over 312–357 the chain is Cytoplasmic; sequence GEIIKAESLQVDTAVRLSNWHLASPKTRTSLSLIILQSQKEVLIRA. A helical membrane pass occupies residues 358–378; the sequence is GFFVASLANFVGICRTALSLI. Residues 379-385 are Extracellular-facing; it reads TLIKSIE.

This sequence belongs to the insect chemoreceptor superfamily. Heteromeric odorant receptor channel (TC 1.A.69) family. Or1a subfamily. Interacts with Orco. Complexes exist early in the endomembrane system in olfactory sensory neurons (OSNs), coupling these complexes to the conserved ciliary trafficking pathway. As to expression, expressed in olfactory sensory neurons in the antenna.

Its subcellular location is the cell membrane. Functionally, odorant receptor which mediates acceptance or avoidance behavior, depending on its substrates. The odorant receptor repertoire encodes a large collection of odor stimuli that vary widely in identity, intensity, and duration. May form a complex with Orco to form odorant-sensing units, providing sensitive and prolonged odorant signaling and calcium permeability. The sequence is that of Odorant receptor 82a (Or82a) from Drosophila melanogaster (Fruit fly).